The primary structure comprises 221 residues: Probable septum site-determining protein MinC (221 aa).

Belongs to the MinC family. As to quaternary structure, interacts with MinD and FtsZ.

Cell division inhibitor that blocks the formation of polar Z ring septums. Rapidly oscillates between the poles of the cell to destabilize FtsZ filaments that have formed before they mature into polar Z rings. Prevents FtsZ polymerization. The polypeptide is Probable septum site-determining protein MinC (Shewanella sp. (strain MR-7)).